We begin with the raw amino-acid sequence, 488 residues long: Dipeptide and tripeptide permease B (488 aa).

The Cytoplasmic segment spans residues 1-27 (MSKTASVGLWDQPKPFFMIFFVELWER). Residues 28-48 (FGFYGVQGILAIYFVQQLGFS) traverse the membrane as a helical segment. Over 49-52 (EEQS) the chain is Periplasmic. The helical transmembrane segment at 53-73 (FITFGAFTALVYGLISVGGYV) threads the bilayer. Residues 74 to 82 (GDHILGTKR) lie on the Cytoplasmic side of the membrane. The helical transmembrane segment at 83–103 (TIVLGAIVMAIGYYMIGLSIM) threads the bilayer. The Periplasmic segment spans residues 104 to 106 (KPE). Residues 107-127 (LIFYALGTVAVGNGLFKANPA) form a helical membrane-spanning segment. Residues 128–146 (SLLAKCYQPQDPRLDGAFT) lie on the Cytoplasmic side of the membrane. The helical transmembrane segment at 147 to 167 (LFYMSINLGSLFSLSLAPVIA) threads the bilayer. At 168-172 (EKYGY) the chain is on the periplasmic side. The helical transmembrane segment at 173 to 193 (TVTYNICGIGLIIALLVYIAC) threads the bilayer. The Cytoplasmic portion of the chain corresponds to 194–211 (RRMVHNIGSAPDHHPVKP). A helical membrane pass occupies residues 212-232 (IGLIAVLIGSVVMVGVCAWLL). Residues 233–234 (HN) are Periplasmic-facing. Residues 235 to 255 (IKVANIALFAITTIVVLIFFW) form a helical membrane-spanning segment. At 256–267 (QAFKQNRVGRNK) the chain is on the cytoplasmic side. Residues 268-288 (MFVAFILMLQAVVFFILYNQM) traverse the membrane as a helical segment. The Periplasmic portion of the chain corresponds to 289–311 (PMSLNFFAINNVHHQILGFDVNP). A helical transmembrane segment spans residues 312-332 (VSFQAFNPFWIIIVSPILAVV). Residues 333-348 (YTKLGAKGKDFSMPAK) are Cytoplasmic-facing. The helical transmembrane segment at 349 to 369 (FTFGMFLCSLGFLTAAASGLF) threads the bilayer. Residues 370–378 (ADAQGITSP) are Periplasmic-facing. Residues 379-399 (WFIVLVYLFQSVGELMISALG) form a helical membrane-spanning segment. The Cytoplasmic segment spans residues 400–423 (LAMVAAFVPSYLTGFILGMWFLSQ). A helical transmembrane segment spans residues 424 to 444 (AVASMLASHVAALTATPVGVT). Over 445 to 455 (DPLQTLPIYMS) the chain is Periplasmic. A helical transmembrane segment spans residues 456–476 (VFGKIGVATLIVAIIMTFMVP). Residues 477–488 (WLNRIMREEVKA) lie on the Cytoplasmic side of the membrane.

It belongs to the major facilitator superfamily. Proton-dependent oligopeptide transporter (POT/PTR) (TC 2.A.17) family. DtpB subfamily.

It is found in the cell inner membrane. Proton-dependent permease that transports di- and tripeptides. The chain is Dipeptide and tripeptide permease B from Xenorhabdus bovienii (strain SS-2004) (Xenorhabdus nematophila subsp. bovienii).